The sequence spans 1348 residues: Phosphoribosylformylglycinamidine synthase (1348 aa).

ATP contacts are provided by residues 300 to 311 (GAATGAGGEIRD) and Ala701. 4 residues coordinate Mg(2+): Asp702, Glu741, Asn745, and Asp941. ATP is bound at residue Ser943. The region spanning 1099 to 1348 (VAILREQGVN…MFRNARVWCG (250 aa)) is the Glutamine amidotransferase type-1 domain. Cys1192 (nucleophile) is an active-site residue. Catalysis depends on residues His1313 and Glu1315.

It in the N-terminal section; belongs to the FGAMS family. In terms of assembly, monomer.

It localises to the cytoplasm. It catalyses the reaction N(2)-formyl-N(1)-(5-phospho-beta-D-ribosyl)glycinamide + L-glutamine + ATP + H2O = 2-formamido-N(1)-(5-O-phospho-beta-D-ribosyl)acetamidine + L-glutamate + ADP + phosphate + H(+). It participates in purine metabolism; IMP biosynthesis via de novo pathway; 5-amino-1-(5-phospho-D-ribosyl)imidazole from N(2)-formyl-N(1)-(5-phospho-D-ribosyl)glycinamide: step 1/2. Functionally, phosphoribosylformylglycinamidine synthase involved in the purines biosynthetic pathway. Catalyzes the ATP-dependent conversion of formylglycinamide ribonucleotide (FGAR) and glutamine to yield formylglycinamidine ribonucleotide (FGAM) and glutamate. This Xanthomonas axonopodis pv. citri (strain 306) protein is Phosphoribosylformylglycinamidine synthase.